A 262-amino-acid polypeptide reads, in one-letter code: uncharacterized protein (262 aa).

7 helical membrane passes run 42 to 62 (IAKFNTIMYLVPYIITYTVLN), 71 to 91 (IINIVYLFVNVISGLFHLLYF), 115 to 135 (IGLAIVSFVYQLSMYIIMELI), 145 to 165 (VVSYLIKFIILTLYHSFCCFN), 185 to 205 (LWAYYLGYGTIASLMYIYSNH), 206 to 226 (PLMIYTYNIYMSILIILPFMI), and 235 to 255 (AYPSINLKIFSIIVGYFNYAI).

The protein localises to the membrane. This is an uncharacterized protein from Acanthamoeba polyphaga mimivirus (APMV).